A 282-amino-acid polypeptide reads, in one-letter code: 2,3,4,5-tetrahydropyridine-2,6-dicarboxylate N-succinyltransferase (282 aa).

Substrate contacts are provided by Arg-109 and Asp-146.

It belongs to the transferase hexapeptide repeat family. As to quaternary structure, homotrimer.

It localises to the cytoplasm. The catalysed reaction is (S)-2,3,4,5-tetrahydrodipicolinate + succinyl-CoA + H2O = (S)-2-succinylamino-6-oxoheptanedioate + CoA. It functions in the pathway amino-acid biosynthesis; L-lysine biosynthesis via DAP pathway; LL-2,6-diaminopimelate from (S)-tetrahydrodipicolinate (succinylase route): step 1/3. This Bartonella quintana (strain Toulouse) (Rochalimaea quintana) protein is 2,3,4,5-tetrahydropyridine-2,6-dicarboxylate N-succinyltransferase.